A 56-amino-acid polypeptide reads, in one-letter code: Alpha-conotoxin Pn1.2 (56 aa).

The first 16 residues, 1-16, serve as a signal peptide directing secretion; it reads MFTVFLLVVLATTVVS. Residues 17-39 constitute a propeptide that is removed on maturation; that stretch reads FTSDRASDGGNAAMSDLIALTIK. 2 disulfide bridges follow: Cys41/Cys47 and Cys42/Cys55. The segment at 43–45 is ser-Xaa-Pro motif, crucial for potent interaction with nAChR; sequence SHP. Cys55 carries the post-translational modification Cysteine amide.

It belongs to the conotoxin A superfamily. Post-translationally, non-native isomers 'ribbon' (with disulfide connectivity C1-C4; C2-C3) and 'beads' (with disulfide connectivity C1-C2; C3-C4) also inhibit high voltage-activated (HVA) calcium channel currents in rat DRG neurons (20-30% inhibition at 1 uM toxin). As to expression, expressed by the venom duct.

The protein resides in the secreted. Alpha-conotoxins act on postsynaptic membranes, they bind to the nicotinic acetylcholine receptors (nAChR) and thus inhibit them. This toxin inhibits human alpha-7/CHRNA7 and alpha-9-alpha-10/CHRNA9/CHRNA10 AChR (complete inhibition at 3 uM of toxin). In addition, this toxin inhibits high voltage-activated (HVA) calcium channel currents in rat DRG neurons (22% inhibition at 1 uM toxin) probably by activating GABA(B) receptors (GABBR1 and/or GABBR2). The chain is Alpha-conotoxin Pn1.2 from Conus pennaceus (Feathered cone).